A 418-amino-acid chain; its full sequence is Beta-2 adrenergic receptor (418 aa).

Residues 1 to 34 (MGQPGNRSVFLLAPNGSHAPDQDVPQERDEAWVV) are Extracellular-facing. 2 N-linked (GlcNAc...) asparagine glycosylation sites follow: N6 and N15. A helical membrane pass occupies residues 35–58 (GMAIVMSLIVLAIVFGNVLVITAI). Topologically, residues 59-71 (AKFERLQTVTNYF) are cytoplasmic. The helical transmembrane segment at 72-95 (ITSLACADLVMGLAVVPFGASHIL) threads the bilayer. Over 96-106 (MKMWTFGSFWC) the chain is Extracellular. Cystine bridges form between C106–C191 and C184–C190. The chain crosses the membrane as a helical span at residues 107–129 (EFWISIDVLCVTASIETLCVIAV). At 130–150 (DRYLAITSPFKYQCLLTKNKA) the chain is on the cytoplasmic side. Position 141 is a phosphotyrosine (Y141). A helical membrane pass occupies residues 151-174 (RVVILMVWVVSGLISFLPIKMHWY). The Extracellular segment spans residues 175–196 (QATHREALNCYAEEACCDFFTN). A helical transmembrane segment spans residues 197–220 (QPYAIASSIVSFYLPLVVMVFVYS). Over 221 to 274 (RVFQVARRQLQKIDKSEGRFHAQNLSQAEQDGRSGPGHRRSSKFCLKEHKALKT) the chain is Cytoplasmic. Phosphoserine is present on S246. 2 positions are modified to phosphoserine; by PKA: S261 and S262. C265 is lipidated: S-palmitoyl cysteine. The chain crosses the membrane as a helical span at residues 275–298 (LGIIMGTFTLCWLPFFIVNIVHGI). Residues 299–305 (HDNLIPK) are Extracellular-facing. Residues 306 to 329 (EVYILLNWVGYVNSAFNPLIYCRS) form a helical membrane-spanning segment. Residues 330–418 (PDFRMAFQEL…RNCSTNDSML (89 aa)) lie on the Cytoplasmic side of the membrane. C341 carries the S-palmitoyl cysteine lipid modification. Phosphoserine; by PKA is present on residues S345 and S346. Phosphoserine; by BARK occurs at positions 355 and 356. A disordered region spans residues 381 to 418 (RLCEDAPGPEGCAHRQGTVPDDSTDSQGRNCSTNDSML). 2 positions are modified to 4-hydroxyproline: P387 and P400. Polar residues predominate over residues 405–418 (DSQGRNCSTNDSML). The PDZ-binding motif lies at 415–418 (DSML).

The protein belongs to the G-protein coupled receptor 1 family. Adrenergic receptor subfamily. ADRB2 sub-subfamily. Binds NHERF1 and GPRASP1. Interacts with ARRB1 and ARRB2. Interacts with SRC. Interacts with USP20 and USP33. Interacts with VHL; the interaction, which is increased on hydroxylation of ADRB2, ubiquitinates ADRB2 leading to its degradation. Interacts with EGLN3; the interaction hydroxylates ADRB2 facilitating VHL-E3 ligase-mediated ubiquitination. Interacts (via PDZ-binding motif) with SNX27 (via PDZ domain); the interaction is required when endocytosed to prevent degradation in lysosomes and promote recycling to the plasma membrane. Interacts with CNIH4. Interacts with ARRDC3. Interacts with NEDD4. Interacts with MARCHF2. Post-translationally, palmitoylated; may reduce accessibility of Ser-345 and Ser-346 by anchoring Cys-341 to the plasma membrane. Agonist stimulation promotes depalmitoylation and further allows Ser-345 and Ser-346 phosphorylation. In terms of processing, phosphorylated by PKA and BARK upon agonist stimulation, which mediates homologous desensitization of the receptor. PKA-mediated phosphorylation seems to facilitate phosphorylation by BARK. Phosphorylation of Tyr-141 is induced by insulin and leads to supersensitization of the receptor. Post-translationally, polyubiquitinated. Agonist-induced ubiquitination leads to sort internalized receptors to the lysosomes for degradation. Deubiquitination by USP20 and USP33, leads to ADRB2 recycling and resensitization after prolonged agonist stimulation. USP20 and USP33 are constitutively associated and are dissociated immediately after agonist stimulation. Ubiquitination by the VHL-E3 ligase complex is oxygen-dependent. In terms of processing, hydroxylation by EGLN3 occurs only under normoxia and increases the interaction with VHL and the subsequent ubiquitination and degradation of ADRB2. Palmitoylated. Mainly palmitoylated at Cys-341. Palmitoylation may reduce accessibility of phosphorylation sites by anchoring the receptor to the plasma membrane. Agonist stimulation promotes depalmitoylation and further allows Ser-345 and Ser-346 phosphorylation. Also undergoes transient, ligand-induced palmitoylation at Cys-265 probably by ZDHHC9, ZDHHC14 and ZDHHC18 within the Golgi. Palmitoylation at Cys-265 requires phosphorylation by PKA and receptor internalization and stabilizes the receptor. Could be depalmitoylated by LYPLA1 at the plasma membrane. As to expression, expressed in heart, liver, lung, skeletal muscle and subcutaneous adipose tissue.

It is found in the cell membrane. The protein resides in the early endosome. Its subcellular location is the golgi apparatus. Beta-adrenergic receptors mediate the catecholamine-induced activation of adenylate cyclase through the action of G proteins. The beta-2-adrenergic receptor binds epinephrine with an approximately 30-fold greater affinity than it does norepinephrine. In Sus scrofa (Pig), this protein is Beta-2 adrenergic receptor (ADRB2).